Here is a 683-residue protein sequence, read N- to C-terminus: Methionine--tRNA ligase (683 aa).

The 'HIGH' region motif lies at Pro23–His33. Zn(2+) is bound by residues Cys154, Cys157, Cys166, and Cys170. The short motif at Lys335–Ser339 is the 'KMSKS' region element. Lys338 is a binding site for ATP. The tRNA-binding domain occupies Asp583–Arg683.

The protein belongs to the class-I aminoacyl-tRNA synthetase family. MetG type 1 subfamily. Homodimer. The cofactor is Zn(2+).

The protein resides in the cytoplasm. It catalyses the reaction tRNA(Met) + L-methionine + ATP = L-methionyl-tRNA(Met) + AMP + diphosphate. Its function is as follows. Is required not only for elongation of protein synthesis but also for the initiation of all mRNA translation through initiator tRNA(fMet) aminoacylation. The sequence is that of Methionine--tRNA ligase from Methanocella arvoryzae (strain DSM 22066 / NBRC 105507 / MRE50).